The sequence spans 253 residues: Probable transcriptional regulatory protein Tpet_0454 (253 aa).

The protein belongs to the TACO1 family.

It localises to the cytoplasm. The protein is Probable transcriptional regulatory protein Tpet_0454 of Thermotoga petrophila (strain ATCC BAA-488 / DSM 13995 / JCM 10881 / RKU-1).